A 222-amino-acid polypeptide reads, in one-letter code: Guanylate kinase (222 aa).

A Guanylate kinase-like domain is found at 19 to 197 (GFLFILSSPS…SVSLIKSIYL (179 aa)). 26–33 (SPSGAGKS) serves as a coordination point for ATP.

The protein belongs to the guanylate kinase family.

The protein localises to the cytoplasm. It carries out the reaction GMP + ATP = GDP + ADP. Its function is as follows. Essential for recycling GMP and indirectly, cGMP. The polypeptide is Guanylate kinase (Bartonella henselae (strain ATCC 49882 / DSM 28221 / CCUG 30454 / Houston 1) (Rochalimaea henselae)).